The chain runs to 372 residues: Glutamate 5-kinase (372 aa).

Lys14 is an ATP binding site. Residues Ser54, Asp141, and Asn153 each contribute to the substrate site. Residues 173 to 174 (TD) and 215 to 221 (TGGMATK) contribute to the ATP site. The region spanning 280–358 (RGQLVIDAGA…DSIEEVLGYD (79 aa)) is the PUA domain.

Belongs to the glutamate 5-kinase family.

The protein localises to the cytoplasm. The catalysed reaction is L-glutamate + ATP = L-glutamyl 5-phosphate + ADP. It functions in the pathway amino-acid biosynthesis; L-proline biosynthesis; L-glutamate 5-semialdehyde from L-glutamate: step 1/2. Catalyzes the transfer of a phosphate group to glutamate to form L-glutamate 5-phosphate. This Shewanella pealeana (strain ATCC 700345 / ANG-SQ1) protein is Glutamate 5-kinase.